A 1058-amino-acid chain; its full sequence is SMC5-SMC6 complex localization factor protein 1 (1058 aa).

BRCT domains lie at 12-77 (MTGF…IHSA) and 119-196 (GAPG…GDFL). The NSE5-like domain; mediates interaction with SLF2 stretch occupies residues 410–1058 (PRGVLNLIES…MMCRSVMEFS (649 aa)). 3 ANK repeats span residues 806–836 (KGET…DINV), 840–869 (AGWT…EVDL), and 874–903 (DGVT…PVLL). Lys-931 is covalently cross-linked (Glycyl lysine isopeptide (Lys-Gly) (interchain with G-Cter in SUMO2)).

In terms of assembly, interacts (via N-terminus) with SLF2; this interaction links RAD18 to the SMC5-SMC6 complex. Interacts (via BRCT domains) with RAD18; this interaction occurs in a SLF2-independent manner. Interacts with SMC6. Interacts (via BRCT domains) with RAD18 (via C-terminus and phosphorylated form); this interaction is required for efficient repair of UV-induced DNA damage.

It localises to the nucleus. Its subcellular location is the cytoplasm. It is found in the cytoskeleton. The protein localises to the microtubule organizing center. The protein resides in the centrosome. Functionally, plays a role in the DNA damage response (DDR) pathway by regulating postreplication repair of UV-damaged DNA and genomic stability maintenance. The SLF1-SLF2 complex acts to link RAD18 with the SMC5-SMC6 complex at replication-coupled interstrand cross-links (ICL) and DNA double-strand breaks (DSBs) sites on chromatin during DNA repair in response to stalled replication forks. Promotes the recruitment of SLF2 and the SMC5-SMC6 complex to DNA lesions. This is SMC5-SMC6 complex localization factor protein 1 from Homo sapiens (Human).